Reading from the N-terminus, the 1004-residue chain is UPF0182 protein Noca_1530 (1004 aa).

A disordered region spans residues 1-20; sequence MSELFDEAPRDPGPPARSGS. The next 7 helical transmembrane spans lie at 26–46, 71–91, 120–140, 183–203, 212–232, 261–281, and 293–313; these read LIVTAVVLVIGFLGLSTFAGI, VLFFLFGAGMALVVGVNIYLA, TWLLVGVALVLGAFAGSSAIG, MAVLVVALIAAAVVHYLYGGI, LSGAAQAQISVLLGFFVLAKA, VLPAKNILLGISIICAVLFFV, and VGLALLAVSAILLGLIWPGIV. 2 disordered regions span residues 899–924 and 974–1004; these read GVSTGPGTQPPDTGQPGDNENPPPAT and LGQKRGSAGQPSGSPSGSASSSPSESPSPSS. 2 stretches are compositionally biased toward low complexity: residues 903–916 and 979–1004; these read GPGTQPPDTGQPGD and GSAGQPSGSPSGSASSSPSESPSPSS.

Belongs to the UPF0182 family.

Its subcellular location is the cell membrane. This Nocardioides sp. (strain ATCC BAA-499 / JS614) protein is UPF0182 protein Noca_1530.